A 277-amino-acid chain; its full sequence is Phosphatidylglycerol--prolipoprotein diacylglyceryl transferase (277 aa).

4 consecutive transmembrane segments (helical) span residues 11–31 (IIFSIGSFKAHWYGFMYLISF), 55–75 (LLYIIFISSCIGGRIGYIIFY), 93–113 (GGMSFHGGLIGAIIAMYYLSL), and 117–137 (VKILKISDFIVPLVPFGLGAG). Residue R138 coordinates a 1,2-diacyl-sn-glycero-3-phospho-(1'-sn-glycerol). 3 consecutive transmembrane segments (helical) span residues 192-212 (PSQLYEFFLEGIFLFFIIYFF), 220-240 (GSISALFLISYGILRIISEFF), and 256-276 (MGQILSIPMIIIGVLYVNLFI).

This sequence belongs to the Lgt family.

It localises to the cell inner membrane. It catalyses the reaction L-cysteinyl-[prolipoprotein] + a 1,2-diacyl-sn-glycero-3-phospho-(1'-sn-glycerol) = an S-1,2-diacyl-sn-glyceryl-L-cysteinyl-[prolipoprotein] + sn-glycerol 1-phosphate + H(+). The protein operates within protein modification; lipoprotein biosynthesis (diacylglyceryl transfer). Catalyzes the transfer of the diacylglyceryl group from phosphatidylglycerol to the sulfhydryl group of the N-terminal cysteine of a prolipoprotein, the first step in the formation of mature lipoproteins. This Buchnera aphidicola subsp. Schizaphis graminum (strain Sg) protein is Phosphatidylglycerol--prolipoprotein diacylglyceryl transferase.